We begin with the raw amino-acid sequence, 611 residues long: Dihydroxy-acid dehydratase (611 aa).

Asp-81 contributes to the Mg(2+) binding site. Cys-122 contributes to the [2Fe-2S] cluster binding site. Mg(2+) is bound by residues Asp-123 and Lys-124. Lys-124 bears the N6-carboxylysine mark. [2Fe-2S] cluster is bound at residue Cys-195. Glu-491 lines the Mg(2+) pocket. The Proton acceptor role is filled by Ser-517.

The protein belongs to the IlvD/Edd family. In terms of assembly, homodimer. It depends on [2Fe-2S] cluster as a cofactor. Requires Mg(2+) as cofactor.

It carries out the reaction (2R)-2,3-dihydroxy-3-methylbutanoate = 3-methyl-2-oxobutanoate + H2O. The catalysed reaction is (2R,3R)-2,3-dihydroxy-3-methylpentanoate = (S)-3-methyl-2-oxopentanoate + H2O. It functions in the pathway amino-acid biosynthesis; L-isoleucine biosynthesis; L-isoleucine from 2-oxobutanoate: step 3/4. It participates in amino-acid biosynthesis; L-valine biosynthesis; L-valine from pyruvate: step 3/4. Functions in the biosynthesis of branched-chain amino acids. Catalyzes the dehydration of (2R,3R)-2,3-dihydroxy-3-methylpentanoate (2,3-dihydroxy-3-methylvalerate) into 2-oxo-3-methylpentanoate (2-oxo-3-methylvalerate) and of (2R)-2,3-dihydroxy-3-methylbutanoate (2,3-dihydroxyisovalerate) into 2-oxo-3-methylbutanoate (2-oxoisovalerate), the penultimate precursor to L-isoleucine and L-valine, respectively. This is Dihydroxy-acid dehydratase from Actinobacillus pleuropneumoniae serotype 3 (strain JL03).